The primary structure comprises 88 residues: Small ribosomal subunit protein bS20 (88 aa).

Belongs to the bacterial ribosomal protein bS20 family.

In terms of biological role, binds directly to 16S ribosomal RNA. In Bartonella tribocorum (strain CIP 105476 / IBS 506), this protein is Small ribosomal subunit protein bS20.